Reading from the N-terminus, the 86-residue chain is MASEPRGSRKVKIGVVVSAKMEKTVVVRVERIFSHPQYLKVVRSSKKYYAHTELKVSEGDKVKIQETRPLSKLKRWRVIEHVGVVS.

Belongs to the universal ribosomal protein uS17 family. In terms of assembly, part of the 30S ribosomal subunit.

Functionally, one of the primary rRNA binding proteins, it binds specifically to the 5'-end of 16S ribosomal RNA. This chain is Small ribosomal subunit protein uS17, found in Chlamydia pneumoniae (Chlamydophila pneumoniae).